A 450-amino-acid chain; its full sequence is Phosphoglucosamine mutase (450 aa).

The Phosphoserine intermediate role is filled by Ser101. Mg(2+) is bound by residues Ser101, Asp240, Asp242, and Asp244. Ser101 carries the post-translational modification Phosphoserine.

The protein belongs to the phosphohexose mutase family. It depends on Mg(2+) as a cofactor. In terms of processing, activated by phosphorylation.

The catalysed reaction is alpha-D-glucosamine 1-phosphate = D-glucosamine 6-phosphate. Catalyzes the conversion of glucosamine-6-phosphate to glucosamine-1-phosphate. This chain is Phosphoglucosamine mutase, found in Streptococcus sanguinis (strain SK36).